A 447-amino-acid polypeptide reads, in one-letter code: UPF0210 protein Lreu_0940 (447 aa).

Belongs to the UPF0210 family. In terms of assembly, homodimer.

This is UPF0210 protein Lreu_0940 from Limosilactobacillus reuteri (strain DSM 20016) (Lactobacillus reuteri).